The primary structure comprises 464 residues: Sensor protein IrlS (464 aa).

The Periplasmic portion of the chain corresponds to 1-13 (MIRRLLPRTLRAR). The helical transmembrane segment at 14–34 (LTALIILSTAATLALSGVALY) threads the bilayer. Residues 35 to 166 (SALHNRLVGM…DHALLRAYAY (132 aa)) lie on the Cytoplasmic side of the membrane. The helical transmembrane segment at 167 to 187 (TVVVIEVLAVVLTAALAYGIA) threads the bilayer. Residues 188–241 (MLGLSPLRRLVARAEQMSSSRLAQPLPELDTSGELKEMEHAFNAMLKRLDESFV) form the HAMP domain. Topologically, residues 188–464 (MLGLSPLRRL…FWLKFPAHAA (277 aa)) are periplasmic. The region spanning 249–463 (NLAHDMRTPL…TFWLKFPAHA (215 aa)) is the Histidine kinase domain. A Phosphohistidine; by autocatalysis modification is found at His252.

The protein resides in the cell inner membrane. The catalysed reaction is ATP + protein L-histidine = ADP + protein N-phospho-L-histidine.. Its function is as follows. Member of the two-component regulatory system IrlR/IrlS. May be involved in invasion of eukaryotic cells and heavy-metal resistance. Probably activates IrlR by phosphorylation. This is Sensor protein IrlS (irlS) from Burkholderia pseudomallei (strain K96243).